Here is a 1486-residue protein sequence, read N- to C-terminus: Chromosome partition protein MukB (1486 aa).

34-41 (GGNGAGKS) is a binding site for ATP. 3 coiled-coil regions span residues 326–418 (LEAD…QYNQ), 444–480 (LETF…QAYQ), and 509–603 (RHLA…RAPV). Positions 666–783 (PGGSEDQRLN…EVPLFGRAAR (118 aa)) are flexible hinge. Coiled-coil stretches lie at residues 835–923 (EAEI…AKLE), 977–1115 (EMLS…TAKA), and 1209–1266 (VEAI…QNVS).

The protein belongs to the SMC family. MukB subfamily. As to quaternary structure, homodimerization via its hinge domain. Binds to DNA via its C-terminal region. Interacts, and probably forms a ternary complex, with MukE and MukF via its C-terminal region. The complex formation is stimulated by calcium or magnesium. Interacts with tubulin-related protein FtsZ.

The protein localises to the cytoplasm. It is found in the nucleoid. Its function is as follows. Plays a central role in chromosome condensation, segregation and cell cycle progression. Functions as a homodimer, which is essential for chromosome partition. Involved in negative DNA supercoiling in vivo, and by this means organize and compact chromosomes. May achieve or facilitate chromosome segregation by condensation DNA from both sides of a centrally located replisome during cell division. The chain is Chromosome partition protein MukB from Escherichia coli (strain 55989 / EAEC).